A 290-amino-acid polypeptide reads, in one-letter code: Putative speedy protein-like protein 3 (290 aa).

Positions 16 to 50 are disordered; that stretch reads GVDPSPPCRSLGWKRKKEWSDESEEEPEKELAPEP. A compositionally biased stretch (acidic residues) spans 36 to 50; the sequence is DESEEEPEKELAPEP.

The protein belongs to the Speedy/Ringo family.

The protein is Putative speedy protein-like protein 3 of Homo sapiens (Human).